A 34-amino-acid chain; its full sequence is Conotoxin Cl6d (34 aa).

3 disulfide bridges follow: cysteine 4–cysteine 19, cysteine 12–cysteine 29, and cysteine 18–cysteine 33. A 4-hydroxyproline mark is found at proline 14 and proline 21.

In terms of tissue distribution, expressed by the venom duct.

It localises to the secreted. This is Conotoxin Cl6d from Californiconus californicus (California cone).